The following is a 252-amino-acid chain: Zinc finger protein 511 (252 aa).

C2H2-type zinc fingers lie at residues 80-105 (FACQ…HTLH), 107-130 (NVCS…LEWH), and 144-169 (YQCL…VRMH). Positions 177-221 (FDKPKKSRSPASAEAPGDSGERSEGEAMEICSEPVAASPAPAGER) are disordered. Arg240 carries the omega-N-methylarginine modification.

The protein belongs to the krueppel C2H2-type zinc-finger protein family.

It localises to the nucleus. Its function is as follows. May be involved in transcriptional regulation. The chain is Zinc finger protein 511 from Homo sapiens (Human).